The chain runs to 258 residues: NAD(P)H-hydrate epimerase (258 aa).

The YjeF N-terminal domain occupies Ala-15–Asp-244. Asn-75 to Asp-79 serves as a coordination point for (6S)-NADPHX. The K(+) site is built by Asn-76 and Asp-145. Residues Gly-149 to Pro-155 and Asp-181 each bind (6S)-NADPHX. Ser-184 lines the K(+) pocket.

This sequence belongs to the NnrE/AIBP family. Requires K(+) as cofactor.

It is found in the cytoplasm. Its subcellular location is the mitochondrion. The catalysed reaction is (6R)-NADHX = (6S)-NADHX. It catalyses the reaction (6R)-NADPHX = (6S)-NADPHX. Functionally, catalyzes the epimerization of the S- and R-forms of NAD(P)HX, a damaged form of NAD(P)H that is a result of enzymatic or heat-dependent hydration. This is a prerequisite for the S-specific NAD(P)H-hydrate dehydratase to allow the repair of both epimers of NAD(P)HX. This chain is NAD(P)H-hydrate epimerase, found in Candida albicans (strain SC5314 / ATCC MYA-2876) (Yeast).